A 260-amino-acid chain; its full sequence is 4-hydroxy-tetrahydrodipicolinate reductase (260 aa).

NAD(+) contacts are provided by residues 12–17 (GFRGKM), 92–94 (GTT), and 118–121 (APNF). The active-site Proton donor/acceptor is His-148. His-149 serves as a coordination point for (S)-2,3,4,5-tetrahydrodipicolinate. Lys-152 functions as the Proton donor in the catalytic mechanism. Position 158-159 (158-159 (GT)) interacts with (S)-2,3,4,5-tetrahydrodipicolinate.

It belongs to the DapB family.

Its subcellular location is the cytoplasm. The enzyme catalyses (S)-2,3,4,5-tetrahydrodipicolinate + NAD(+) + H2O = (2S,4S)-4-hydroxy-2,3,4,5-tetrahydrodipicolinate + NADH + H(+). It carries out the reaction (S)-2,3,4,5-tetrahydrodipicolinate + NADP(+) + H2O = (2S,4S)-4-hydroxy-2,3,4,5-tetrahydrodipicolinate + NADPH + H(+). It participates in amino-acid biosynthesis; L-lysine biosynthesis via DAP pathway; (S)-tetrahydrodipicolinate from L-aspartate: step 4/4. Catalyzes the conversion of 4-hydroxy-tetrahydrodipicolinate (HTPA) to tetrahydrodipicolinate. The chain is 4-hydroxy-tetrahydrodipicolinate reductase from Lactococcus lactis subsp. cremoris (strain SK11).